We begin with the raw amino-acid sequence, 344 residues long: MMVIRPVERTDVSALMQLASKTGGGLTSLPANEATLSARIERAIKTWQGELPKSEQGYVFVLEDSETGTVAGICAIEVAVGLNDPWYNYRVGTLVHASKELNVYNALPTLFLSNDHTGSSELCTLFLDPDWRKEGNGYLLSKSRFMFMAAFRDKFNDKVVAEMRGVIDEHGYSPFWQSLGKRFFSMDFSRADFLCGTGQKAFIAELMPKHPIYTHFLSQEAQDVIGQVHPQTAPARAVLEKEGFRYRNYIDIFDGGPTLECDIDRVRAIRKSRLVEVAEGQPAQGEFPACLVANENYHHFRVVLVRTDPATERLILTAAQLDALKCHAGDRVRLVRLCAEEKTA.

Residue L125 participates in succinyl-CoA binding. Residue H229 is the Proton donor of the active site.

The protein belongs to the arginine N-succinyltransferase family.

The enzyme catalyses succinyl-CoA + L-arginine = N(2)-succinyl-L-arginine + CoA + H(+). Its pathway is amino-acid degradation; L-arginine degradation via AST pathway; L-glutamate and succinate from L-arginine: step 1/5. Catalyzes the transfer of succinyl-CoA to arginine to produce N(2)-succinylarginine. This is Arginine N-succinyltransferase from Escherichia fergusonii (strain ATCC 35469 / DSM 13698 / CCUG 18766 / IAM 14443 / JCM 21226 / LMG 7866 / NBRC 102419 / NCTC 12128 / CDC 0568-73).